The sequence spans 78 residues: Small ribosomal subunit protein bS16c (78 aa).

Belongs to the bacterial ribosomal protein bS16 family.

It localises to the plastid. It is found in the chloroplast. The chain is Small ribosomal subunit protein bS16c from Daucus carota (Wild carrot).